Here is a 12345-residue protein sequence, read N- to C-terminus: Muscle-specific protein 300 kDa (12345 aa).

Disordered stretches follow at residues 1 to 68 (MADS…STVT) and 121 to 152 (WSDG…DAEN). The Cytoplasmic portion of the chain corresponds to 1 to 12295 (MADSGGPGSK…GARFLGRVAR (12295 aa)). The segment covering 19–28 (AGGGGAGAAG) has biased composition (gly residues). Residues 45-60 (EQKSSREQVLEEEKSQ) are compositionally biased toward basic and acidic residues. The stretch at 249 to 273 (FKELENFLEGERTVREVPSADGVRT) is one LRR 1 repeat. 3 disordered regions span residues 295–325 (EGYV…RSVD), 387–488 (TVQV…RKLI), and 504–526 (GKSN…GRPA). Over residues 299–321 (SPRDSPSWSRSSYSSERSSVTPP) the composition is skewed to low complexity. 2 stretches are compositionally biased toward polar residues: residues 387–404 (TVQV…STPQ) and 414–434 (TTKT…QTGP). Residues 462–484 (TITSTTTKSTSSSTSATSSSSTS) show a composition bias toward low complexity. The span at 511–520 (NDIDIDNDSD) shows a compositional bias: acidic residues. 2 Calponin-homology (CH) domains span residues 630-737 (RVQK…LYFQ) and 777-882 (QGAR…HKYP). One copy of the LRR 2 repeat lies at 823 to 847 (LVNLAELKKTSNRQRLETAFDVAES). The stretch at 919–952 (SSFPRDFGEYLLARSEVDAHLAAYNRLKQLIESQ) is one TPR 1 repeat. LRR repeat units follow at residues 1089–1112 (CCLI…YGHE), 1389–1411 (HLFH…IHQW), and 1616–1642 (LKDV…ILQR). The stretch at 1603 to 1636 (LEFRLDENAFYQSLKDVEKELQLEQQALNRNEDV) is one TPR 2 repeat. An HAT 1 repeat occupies 1903 to 1935 (TGWNQAYTETSDKLQALKGTQAVWSEFVDQKND). LRR repeat units follow at residues 2087–2109 (KQLD…IAEA) and 2558–2581 (QQQI…FGQA). The 125-residue stretch at 2109 to 2233 (AKRLKGEITK…SRWTAVHENA (125 aa)) folds into the Calponin-homology (CH) 3 domain. A TPR 3 repeat occupies 2663–2696 (ADRIQKYNLISQALREYADSKDKFSKELKKAEDL). The tract at residues 2699-2724 (AIPQQPRDETELHQASEKTRKTMEQL) is disordered. Positions 2704–2724 (PRDETELHQASEKTRKTMEQL) are enriched in basic and acidic residues. 3 LRR repeats span residues 2728-2751 (KLSL…IGEP), 2935-2959 (CRAL…VDEL), and 3030-3053 (SSDK…IDDC). Residues 2894–2962 (EQELRRRSKE…KQKVDELRNL (69 aa)) adopt a coiled-coil conformation. The stretch at 3110–3207 (LWSQYEQSNE…AVSKALTSYI (98 aa)) is one Spectrin 1 repeat. Residues 3346–3379 (KAKVPTTDELYPTLATKKAALQNYKTQLQEITLH) form a TPR 4 repeat. 4 LRR repeats span residues 3370–3393 (KTQL…AVTL), 3437–3462 (LEKA…TFEK), 3530–3556 (LVKL…WMKN), and 3611–3634 (NLKL…SIAK). Residues 3539-3633 (KWDEFDTIIE…LKNLCKESIA (95 aa)) form a Spectrin 2 repeat. The stretch at 3629 to 3662 (KESIAKYVNYVKDHESFDKDFDSFKQNLQSSVDE) is one TPR 5 repeat. Residues 3706–3739 (KLYGHTSPEGREIIRQQLRALRTLWDNYTDDLNS) form an HAT 2 repeat. Residues 3748-3771 (LLQFNEFSIAQDQLTKWLKDVDKA) form an LRR 15 repeat. One copy of the Spectrin 3 repeat lies at 4177-4273 (SYQDILNQTV…YDQVGQDCAK (97 aa)). One copy of the TPR 6 repeat lies at 4360–4393 (EVMARDLANLHADFEKFGASLSDVKSGLENRLQQ). One copy of the HAT 3 repeat lies at 4371–4403 (ADFEKFGASLSDVKSGLENRLQQWNDYEINLDR). One copy of the Spectrin 4 repeat lies at 4611 to 4701 (FDEIADSLKS…GKLQKRAQNY (91 aa)). LRR repeat units follow at residues 4654 to 4676 (NDIN…LPEK) and 4742 to 4763 (EQIS…LADE). Residues 4799–4830 (EWESLLTTISSTIEAIEARLQHWSEYEQLRDQ) form an HAT 4 repeat. The stretch at 4820–4919 (HWSEYEQLRD…VKELNNRWQQ (100 aa)) is one Spectrin 5 repeat. The stretch at 4839-4863 (DNNLHAIDLKEDLPKKRAQLDALKA) is one LRR 18 repeat. The HAT 5 repeat unit spans residues 4894 to 4926 (ASGPELVTKYQQIFHKVKELNNRWQQYVTSHED). LRR repeat units follow at residues 5266-5289 (QIDI…EKQV) and 5333-5357 (SSVY…RDQH). The TPR 7 repeat unit spans residues 5645-5678 (SAEPEDCEIIEQEVALLQEEFDAYREALNKAKDY). LRR repeat units lie at residues 5761–5784 (SNAI…VMRR), 5820–5843 (PGTL…FETG), and 5979–6002 (TKFD…VNSH). The stretch at 5791 to 5895 (EHQQHHSLYE…DLNDVRQKLA (105 aa)) is one Spectrin 6 repeat. One copy of the HAT 6 repeat lies at 6088–6120 (SEWETLQTISRDARSSLESCLAAWQTFLQKFNK). 2 Spectrin repeats span residues 6321 to 6405 (RWND…DKLK) and 6424 to 6530 (AYHQ…RLLE). 2 coiled-coil regions span residues 6356 to 6397 (MKTL…VNRL) and 6454 to 6484 (REQT…LNAK). The stretch at 6363–6387 (YKTLSNELKLKGNELEQLQSEARDL) is one LRR 24 repeat. One copy of the TPR 8 repeat lies at 6522–6555 (VQIKNRLLESLAKFQEYEDTLDSIMRNLETYEPI). 2 LRR repeats span residues 6531-6554 (SLAK…TYEP) and 6560-6587 (LDAP…LNNE). Residues 6567 to 6597 (LELAQNQLRCAQEMQNKLNNEKSRLAAAVQA) adopt a coiled-coil conformation. The interval 6631–6657 (EDLLDQKPPPKTRSSTGGVSTDDDKDE) is disordered. The TPR 9 repeat unit spans residues 6660 to 6695 (VEIQVELSDVNEALLDPIAHERVKNYRRIVRLNSAH). The LRR 27 repeat unit spans residues 7004 to 7026 (SALRNLNTENRNLSGVLKAELDR). The stretch at 7161–7195 (EMETATEGELRTTSLPVLEEQLAHYKKLLSDAENK) is one TPR 10 repeat. 4 LRR repeats span residues 7219–7242 (LKLN…IDDR), 7300–7318 (KELK…DDLP), 7319–7339 (ELQS…DQLA), and 7340–7361 (HLRQ…IIAF). Residues 7419–7457 (KNSITEQLQSLKNQLQNLRKAVESQRQKHQLQLESHKKM) adopt a coiled-coil conformation. The stretch at 7524 to 7547 (SSLLEMLSEGRSLVASLPHELEER) is one LRR 32 repeat. Residues 7644 to 7676 (TKLTNTLANAKTQQSELEKEAERWREYQQSIDR) form an HAT 7 repeat. One copy of the TPR 11 repeat lies at 7654–7687 (KTQQSELEKEAERWREYQQSIDRVKATIERTKFV). LRR repeat units lie at residues 7692 to 7714 (QNLA…VQSQ), 7752 to 7777 (QDLV…GFEN), and 7816 to 7840 (LREE…ILTF). One copy of the TPR 12 repeat lies at 7759-7792 (EQRRDNLQQLAEHWDGFENSLHAWEKALGRLEDK). Residues 7799–7935 (TVRSRRHLED…NSQVQQAAEE (137 aa)) are a coiled coil. Residues 7878 to 7911 (SKDLEEIEQVFRRISQLQDKLNALHEQLQSVHVY) form a TPR 13 repeat. LRR repeat units follow at residues 8178–8201 (KISV…EWDQ), 8238–8264 (EKTL…HFRN), 8298–8321 (EQTL…IIQE), and 8354–8377 (DELL…SLDG). The stretch at 8431–8464 (QQGITMIANAMHGQKKRQQEIDEYQQHLLELEQW) is one TPR 14 repeat. Residues 8534–8557 (EQLQSIITILREQVTVATKRIFTI) form an LRR 40 repeat. Disordered regions lie at residues 8583 to 8616 (IKPP…EEEI), 8966 to 9023 (QKPT…LPAP), 9131 to 9158 (EFEP…QVVA), 9361 to 9459 (GKES…PDSD), 9502 to 9735 (LVED…TSIS), and 9769 to 9797 (TMQL…EQQL). The span at 8601–8611 (SNENTIDSSSM) shows a compositional bias: polar residues. A compositionally biased stretch (low complexity) spans 8982-9011 (TQVTTTTRTTTATTQEQEQPEQQTQPTTTE). Residues 9136-9151 (SPHEESTKSDLVKPQE) show a composition bias toward basic and acidic residues. A compositionally biased stretch (basic residues) spans 9394-9404 (KRRRKKKKRRD). Acidic residues predominate over residues 9410–9419 (ELEQEQETEP). Residues 9420 to 9439 (EPVAAVKEPEVSSDVPVSPE) show a composition bias toward low complexity. The span at 9440 to 9451 (DSPRDTVRHESI) shows a compositional bias: basic and acidic residues. 3 stretches are compositionally biased toward polar residues: residues 9544–9563 (AVQT…SQTL), 9587–9597 (ISTTEIQTDVS), and 9605–9625 (EISS…TTPK). Over residues 9658-9680 (TSEQSTVTETTTTTETHVQTTTP) the composition is skewed to low complexity. The segment covering 9681 to 9698 (EPREQTEVIKPETAHEET) has biased composition (basic and acidic residues). Residues 9699-9721 (STVELVQFADGEMQTTPPGDQQP) form an LRR 41 repeat. Positions 9711-9735 (MQTTPPGDQQPASLDDSSLTATSIS) are enriched in polar residues. Over residues 9777-9788 (KKSKKDKKKKQK) the composition is skewed to basic residues. 4 LRR repeats span residues 9995-10019 (SNVL…ILEV), 10073-10096 (EEKL…VVQL), 10252-10276 (KEFT…SLEQ), and 10353-10376 (RDEL…TSAD). Coiled coils occupy residues 10072 to 10099 (SEEK…LERQ) and 10172 to 10257 (LSAK…FTKI). The stretch at 10231–10264 (QAERERVLQLQSLAEEYEQTLKEFTKITVLADKL) is one TPR 15 repeat. The stretch at 10426–10458 (IVLLKLREEVALYLHRLLVFKEIWVQYEQQTDK) is one HAT 8 repeat. LRR repeat units follow at residues 10512-10535 (EKSL…QLED), 10570-10593 (EREL…EEEL), and 10644-10667 (AEEL…ISNQ). A TPR 16 repeat occupies 10854–10888 (VVAWNDTSENLQQLRTRYQRAVELWDKYRNASAAV). The HAT 9 repeat unit spans residues 10855–10887 (VAWNDTSENLQQLRTRYQRAVELWDKYRNASAA). LRR repeat units lie at residues 10907-10929 (DALQ…ILEL) and 11021-11043 (AHLQ…HQNS). Residues 11016–11046 (LAALRAHLQTLARTEEQLRQLKERHQNSEVA) adopt a coiled-coil conformation. Residues 11070–11104 (DTFQEYHRLSTRLARSQNSSEALRLWRQYLQHVQS) form an HAT 10 repeat. One copy of the TPR 17 repeat lies at 11072 to 11105 (FQEYHRLSTRLARSQNSSEALRLWRQYLQHVQSF). Residues 11197-11222 (EAERNALQLRYIHLKRVPHLKHRLDA) form an LRR 51 repeat. Coiled coils occupy residues 11220 to 11247 (LDAM…LARH) and 11281 to 11308 (LQRV…AQKL). LRR repeat units lie at residues 11342-11365 (SALE…DMKT), 11398-11422 (LSNY…VEKD), 11670-11692 (EELE…LAMS), 11697-11720 (PENI…LTPR), and 11744-11766 (EATN…ENQQ). Positions 11655-11685 (KHKLEERQMELRAKLEELESQSVNLRQLEQI) form a coiled coil. Positions 11776 to 11806 (LQRLESLEKKLQDAQQHVQQADNLAQEAKTR) form a coiled coil. The stretch at 11804–11836 (KTRTKQQPQLKQLLELVSAYTTLWQTVQTRIVT) is one HAT 11 repeat. 2 LRR repeats span residues 11959-11981 (DTVA…RQQH) and 12198-12220 (SRLT…YIVK). Residues 12253–12272 (SMQAAAPNTENANNTDGGDA) are disordered. Over residues 12256 to 12267 (AAAPNTENANNT) the composition is skewed to low complexity. Residues 12287 to 12345 (ARFLGRVARASLPIQALMLLLLGVATLVPHGEDYTCMFSNTFARSLEPMLSYPHGPPPT) enclose the KASH domain. The chain crosses the membrane as a helical; Anchor for type IV membrane protein span at residues 12296–12316 (ASLPIQALMLLLLGVATLVPH). An LRR 59 repeat occupies 12301–12323 (QALMLLLLGVATLVPHGEDYTCM). At 12317-12345 (GEDYTCMFSNTFARSLEPMLSYPHGPPPT) the chain is on the perinuclear space side.

This sequence belongs to the nesprin family. In terms of assembly, core component of LINC complexes which are composed of inner nuclear membrane SUN domain-containing proteins coupled to outer nuclear membrane KASH domain-containing nesprins. Interacts with klar; this interaction allows the anchoring of the Msp300 nuclear ring structure to the nuclear envelope. Interacts with sls; this interaction mediates the recruitment of Msp300 to the Z-disks.

It localises to the nucleus membrane. Its subcellular location is the cytoplasm. The protein localises to the myofibril. It is found in the sarcomere. The protein resides in the z line. It localises to the cytoskeleton. Its subcellular location is the microtubule organizing center. The protein localises to the perinuclear region. Component of the LINC (LInker of Nucleoskeleton and Cytoskeleton) complex involved in the connection between the nuclear lamina and the cytoskeleton. Collaborates with Klar to promote even spacing of the myonuclei at the periphery of striated muscle fibers by mediating a tight association between a nuclear ring structure of Msp300 and the plus ends of a unique astral MT network. In addition, is essential for anchoring nuclei, mitochondria and endoplasmic reticulum (ER) structures to the Z-disks. In fat body cells, part of perinuclear non-centrosomal microtubule-organizing centers (ncMTOCs) which function to accommodate the organization of microtubule (MT) networks to control nuclear positioning and dynein motor-based retrograde endosomal trafficking. Functions as the primary organizer of the ncMTOC by recruiting Patronin, shot and msps to the organizing centre. Within the ncMTOC, Msp300 and shot anchors the ncMTOC at the nuclear surface and recruits the MT minus-end regulators Patronin and Nin for assembly, anchoring and/or stabilization of circumferential and radial MTs at the ncMTOCs. Patronin, and perhaps Nin, recruits msps to the ncMTOC for the gamma-tubulin-independent elongation of radial MTs. The sequence is that of Muscle-specific protein 300 kDa from Drosophila melanogaster (Fruit fly).